Reading from the N-terminus, the 263-residue chain is Fructose-bisphosphate aldolase class 1 (263 aa).

Lysine 177 (schiff-base intermediate with dihydroxyacetone-P) is an active-site residue.

Belongs to the DeoC/FbaB aldolase family.

The enzyme catalyses beta-D-fructose 1,6-bisphosphate = D-glyceraldehyde 3-phosphate + dihydroxyacetone phosphate. Has aldolase activity with fructose 1,6-bisphosphate. May play a role in the biosynthesis of aromatic amino acids (AroAA). The sequence is that of Fructose-bisphosphate aldolase class 1 (fba1) from Halobacterium salinarum (strain ATCC 29341 / DSM 671 / R1).